The chain runs to 433 residues: GTPase Der (433 aa).

2 consecutive EngA-type G domains span residues 3–167 (NIVA…QDTI) and 174–349 (PKIA…TNKT). Residues 9–16 (GRPNVGKS), 56–60 (DTGGY), 119–122 (NKAD), 180–187 (GRPNVGKS), 227–231 (DTAGI), and 292–295 (NKWD) each bind GTP. In terms of domain architecture, KH-like spans 350 to 433 (QKISTAALNQ…VPVQLVFRKK (84 aa)).

This sequence belongs to the TRAFAC class TrmE-Era-EngA-EngB-Septin-like GTPase superfamily. EngA (Der) GTPase family. In terms of assembly, associates with the 50S ribosomal subunit.

GTPase that plays an essential role in the late steps of ribosome biogenesis. The sequence is that of GTPase Der from Amoebophilus asiaticus (strain 5a2).